A 989-amino-acid polypeptide reads, in one-letter code: Translation initiation factor IF-2 (989 aa).

Disordered regions lie at residues 43 to 219 and 234 to 379; these read KRRR…LQAR and EARR…GGAR. Polar residues predominate over residues 72–87; it reads NTPNKDTAVTQTATKN. The span at 105–146 shows a compositional bias: low complexity; the sequence is PKPVAAEATAQETSKAAPAAAQPVAEKEAAAPASAEAAKSAA. A compositionally biased stretch (basic and acidic residues) spans 149 to 159; sequence VTDRGAKKTTE. The segment covering 160–171 has biased composition (polar residues); it reads KNGANASGNRPS. Residues 234-293 show a composition bias toward basic and acidic residues; the sequence is EARRREDRLKQEADLEEQRRIEEKRRLEAEAKVEAEKQAALKEKEKAEAKARAKAEKEAK. Positions 294 to 303 are enriched in low complexity; that stretch reads AAQAKTAGAA. Over residues 342 to 361 the composition is skewed to basic and acidic residues; the sequence is PRREAPRPAMRDRKGEDRRQ. Positions 489–659 constitute a tr-type G domain; the sequence is SRPPVVTIMG…LLQAEMLELK (171 aa). Residues 498–505 form a G1 region; sequence GHVDHGKT. A GTP-binding site is contributed by 498-505; the sequence is GHVDHGKT. Residues 523–527 form a G2 region; that stretch reads GITQH. The segment at 545-548 is G3; the sequence is DTPG. GTP-binding positions include 545-549 and 599-602; these read DTPGH and NKMD. A G4 region spans residues 599–602; the sequence is NKMD. The segment at 635–637 is G5; the sequence is SAA.

This sequence belongs to the TRAFAC class translation factor GTPase superfamily. Classic translation factor GTPase family. IF-2 subfamily.

The protein localises to the cytoplasm. One of the essential components for the initiation of protein synthesis. Protects formylmethionyl-tRNA from spontaneous hydrolysis and promotes its binding to the 30S ribosomal subunits. Also involved in the hydrolysis of GTP during the formation of the 70S ribosomal complex. In Zymomonas mobilis subsp. mobilis (strain ATCC 31821 / ZM4 / CP4), this protein is Translation initiation factor IF-2.